A 238-amino-acid chain; its full sequence is Ubiquinone biosynthesis O-methyltransferase (238 aa).

S-adenosyl-L-methionine-binding residues include Arg-40, Gly-59, Asp-80, and Met-125.

This sequence belongs to the methyltransferase superfamily. UbiG/COQ3 family.

The enzyme catalyses a 3-demethylubiquinol + S-adenosyl-L-methionine = a ubiquinol + S-adenosyl-L-homocysteine + H(+). It catalyses the reaction a 3-(all-trans-polyprenyl)benzene-1,2-diol + S-adenosyl-L-methionine = a 2-methoxy-6-(all-trans-polyprenyl)phenol + S-adenosyl-L-homocysteine + H(+). Its pathway is cofactor biosynthesis; ubiquinone biosynthesis. Its function is as follows. O-methyltransferase that catalyzes the 2 O-methylation steps in the ubiquinone biosynthetic pathway. This chain is Ubiquinone biosynthesis O-methyltransferase, found in Paracidovorax citrulli (strain AAC00-1) (Acidovorax citrulli).